The sequence spans 182 residues: 5-formyltetrahydrofolate cyclo-ligase (182 aa).

The segment at 1 to 21 (MIRQRRRALTPEQQQEMGQQA) is disordered. Polar residues predominate over residues 11 to 21 (PEQQQEMGQQA). Residues 128-135 (GMGGGFYD) and Asp167 each bind ATP.

This sequence belongs to the 5-formyltetrahydrofolate cyclo-ligase family.

It carries out the reaction (6S)-5-formyl-5,6,7,8-tetrahydrofolate + ATP = (6R)-5,10-methenyltetrahydrofolate + ADP + phosphate. It functions in the pathway one-carbon metabolism; tetrahydrofolate interconversion. In terms of biological role, involved in the removal of 5-formyltetrahydrofolate. In vitro, it is a potent inhibitor of various folate-dependent enzymes in the C1 metabolism network and in vivo it might function as a folate storage. 5-formyltetrahydrofolate is also used as an antifolate rescue agent in cancer chemotherapy. Catalyzes the irreversible ATP-dependent transformation of 5-formyltetrahydrofolate (5-CHO-THF) to form 5,10-methenyltetrahydrofolate (5,10-CH=THF). The reverse reaction is catalyzed by the serine hydroxymethyltransferase GlyA (SHMT). The protein is 5-formyltetrahydrofolate cyclo-ligase (ygfA) of Escherichia coli O157:H7.